The following is a 93-amino-acid chain: YcgL domain-containing protein VV1_0131 (93 aa).

The YcgL domain maps to 1–84 (MLCSIYKSSK…PPENLLQQHK (84 aa)). Residues 72 to 93 (LPPPPENLLQQHKERKAQQKND) form a disordered region.

The chain is YcgL domain-containing protein VV1_0131 from Vibrio vulnificus (strain CMCP6).